The chain runs to 252 residues: Probable transcriptional regulatory protein Caur_1043 (252 aa).

Over residues Met1–Lys14 the composition is skewed to basic residues. Residues Met1–Gly22 are disordered.

It belongs to the TACO1 family.

The protein localises to the cytoplasm. In Chloroflexus aurantiacus (strain ATCC 29366 / DSM 635 / J-10-fl), this protein is Probable transcriptional regulatory protein Caur_1043.